The sequence spans 120 residues: Ribonuclease P protein component 2 (120 aa).

The protein belongs to the eukaryotic/archaeal RNase P protein component 2 family. Consists of a catalytic RNA component and at least 4-5 protein subunits.

Its subcellular location is the cytoplasm. It catalyses the reaction Endonucleolytic cleavage of RNA, removing 5'-extranucleotides from tRNA precursor.. In terms of biological role, part of ribonuclease P, a protein complex that generates mature tRNA molecules by cleaving their 5'-ends. The polypeptide is Ribonuclease P protein component 2 (Methanobrevibacter smithii (strain ATCC 35061 / DSM 861 / OCM 144 / PS)).